A 513-amino-acid chain; its full sequence is MNLLDPFMKMTDEQEKGLSGAPSPTMSEDSAGSPCPSGSGSDTENTRPQENTFPKGEPDLKKESEEDKFPVCIREAVSQVLKGYDWTLVPMPVRVNGSSKNKPHVKRPMNAFMVWAQAARRKLADQYPHLHNAELSKTLGKLWRLLNESEKRPFVEEAERLRVQHKKDHPDYKYQPRRRKSVKNGQAEAEEATEQTHISPNAIFKRLQADSPHSSSGMNEVHSPGKHSGQSQGPPTPPTTPKTDVQPGKADLKREGRPLPEGGRQPPIDFRDVDIGELSSDVISNIETFDVNEFDQYLPPNGHPGVPATHGQVTYTGSYGISSTAATPAGAGHVWMSKQQAPPPPPPPPQQSPQAPPQPPQAPPQAPQAPPQPQPAPPQPQAAHTLTPLSSEPGQAQRTHIKTEQLSPSHYSEQQQHSPQQIAYSPFSLPHYSPSYPPITRSQYDYTDHQNSGSYYSHAAGQGSSLYSTFTYMNPAQRPMYTPIADTSGVPSIPQTHSPQHWEQPVYTQLTRP.

2 disordered regions span residues Met1 to Asp67 and Arg160 to Val273. A compositionally biased stretch (low complexity) spans Ser30–Ser41. Residues Asp42 to Thr52 are compositionally biased toward polar residues. Basic and acidic residues-rich tracts occupy residues Gly56–Asp67 and Arg160–Tyr174. The interval Glu63–Pro103 is dimerization (DIM). Residues Glu63–Pro103 are PQA. The residue at position 64 (Ser64) is a Phosphoserine. The segment at residues Val105 to Lys173 is a DNA-binding region (HMG box). Ser211 bears the Phosphoserine mark. A transactivation domain (TAM) region spans residues Pro224–Pro307. 2 consecutive short sequence motifs (9aaTAD) follow at residues Ile275–Ser284 and Asp290–Leu298. Residues Val334 to Thr447 are disordered. The segment covering Ala341–Pro380 has biased composition (pro residues). A compositionally biased stretch (polar residues) spans Thr387–Ala423. Residues Arg398–Pro513 are transactivation domain (TAC). Lys402 is covalently cross-linked (Glycyl lysine isopeptide (Lys-Gly) (interchain with G-Cter in ubiquitin)). A 9aaTAD 3 motif is present at residues Ser464 to Tyr472. Residues Pro483–Pro513 form a disordered region. The segment covering Gly489–Pro513 has biased composition (polar residues).

As to quaternary structure, homodimer; homodimerization is required for activity. Interacts (via C-terminus) with ZNF219; forming a complex that binds to the COL2A1 promoter and activates COL2A1 expression. Interacts with DDRGK1. Interacts with EP300/p300. Interacts with beta-catenin (CTNNB1); inhibiting CTNNB1 activity by competing with the binding sites of TCF/LEF within CTNNB1. In terms of processing, acetylated; acetylation impairs nuclear localization and ability to transactivate expression of target genes. Deacetylated by SIRT1. Phosphorylation at Ser-64 and Ser-211 by PKA increases transcriptional activity and may help delay chondrocyte maturation downstream of PTHLH/PTHrP signaling. Phosphorylation at either Ser-64 or Ser-211 is required for sumoylation, but phosphorylation is not dependent on sumoylation. Phosphorylated on tyrosine residues; tyrosine dephosphorylation by PTPN11/SHP2 blocks SOX9 phosphorylation by PKA and subsequent SUMOylation. Post-translationally, sumoylated; phosphorylation at either Ser-64 or Ser-211 is required for sumoylation. Sumoylation is induced by BMP signaling pathway. In terms of processing, ubiquitinated; ubiquitination leads to proteasomal degradation and is negatively regulated by DDRGK1.

The protein resides in the nucleus. Transcription factor that plays a key role in chondrocytes differentiation and skeletal development. Specifically binds the 5'-ACAAAG-3' DNA motif present in enhancers and super-enhancers and promotes expression of genes important for chondrogenesis, including cartilage matrix protein-coding genes COL2A1, COL4A2, COL9A1, COL11A2 and ACAN, SOX5 and SOX6. Also binds to some promoter regions. Plays a central role in successive steps of chondrocyte differentiation. Absolutely required for precartilaginous condensation, the first step in chondrogenesis during which skeletal progenitors differentiate into prechondrocytes. Together with SOX5 and SOX6, required for overt chondrogenesis when condensed prechondrocytes differentiate into early stage chondrocytes, the second step in chondrogenesis. Later, required to direct hypertrophic maturation and block osteoblast differentiation of growth plate chondrocytes: maintains chondrocyte columnar proliferation, delays prehypertrophy and then prevents osteoblastic differentiation of chondrocytes by lowering beta-catenin (CTNNB1) signaling and RUNX2 expression. Also required for chondrocyte hypertrophy, both indirectly, by keeping the lineage fate of chondrocytes, and directly, by remaining present in upper hypertrophic cells and transactivating COL10A1 along with MEF2C. Low lipid levels are the main nutritional determinant for chondrogenic commitment of skeletal progenitor cells: when lipids levels are low, FOXO (FOXO1 and FOXO3) transcription factors promote expression of SOX9, which induces chondrogenic commitment and suppresses fatty acid oxidation. Mechanistically, helps, but is not required, to remove epigenetic signatures of transcriptional repression and deposit active promoter and enhancer marks at chondrocyte-specific genes. Acts in cooperation with the Hedgehog pathway-dependent GLI (GLI1 and GLI3) transcription factors. In addition to cartilage development, also acts as a regulator of proliferation and differentiation in epithelial stem/progenitor cells: involved in the lung epithelium during branching morphogenesis, by balancing proliferation and differentiation and regulating the extracellular matrix. Controls epithelial branching during kidney development. The sequence is that of Transcription factor SOX-9 (SOX9) from Canis lupus familiaris (Dog).